The primary structure comprises 340 residues: Oxygen-dependent coproporphyrinogen-III oxidase (340 aa).

A compositionally biased stretch (polar residues) spans 1-14; sequence MTVSPTTQPQTNHS. The segment at 1-22 is disordered; it reads MTVSPTTQPQTNHSLPPADAKQ. Serine 109 lines the substrate pocket. A divalent metal cation is bound by residues histidine 113 and histidine 123. The active-site Proton donor is the histidine 123. 125–127 contacts substrate; that stretch reads NYR. Histidine 157 and histidine 187 together coordinate a divalent metal cation. The segment at 278 to 313 is important for dimerization; that stretch reads YVEFNLVYDRGTIFGLQTNGRTESILMSLPPLVRWQ. A substrate-binding site is contributed by 296–298; the sequence is NGR.

Belongs to the aerobic coproporphyrinogen-III oxidase family. Homodimer. Requires a divalent metal cation as cofactor.

Its subcellular location is the cytoplasm. It catalyses the reaction coproporphyrinogen III + O2 + 2 H(+) = protoporphyrinogen IX + 2 CO2 + 2 H2O. Its pathway is porphyrin-containing compound metabolism; protoporphyrin-IX biosynthesis; protoporphyrinogen-IX from coproporphyrinogen-III (O2 route): step 1/1. In terms of biological role, involved in the heme and chlorophyll biosynthesis. Catalyzes the aerobic oxidative decarboxylation of propionate groups of rings A and B of coproporphyrinogen-III to yield the vinyl groups in protoporphyrinogen-IX. This is Oxygen-dependent coproporphyrinogen-III oxidase from Synechocystis sp. (strain ATCC 27184 / PCC 6803 / Kazusa).